Consider the following 180-residue polypeptide: Putative manganese efflux pump MntP (180 aa).

A run of 5 helical transmembrane segments spans residues 6 to 26 (VLLLAGALGTDAFSLCLGLGL), 33 to 53 (MAWMLVGLIVALHVVLPVAGW), 63 to 83 (VGRWAAYLGAAILFYLGVKMV), 101 to 121 (GFLGLTVLAGSVSMDALSVGF), and 130 to 150 (LLLTAGVIGLVAGLMSAAAFV).

Belongs to the MntP (TC 9.B.29) family.

The protein localises to the cell membrane. Functionally, probably functions as a manganese efflux pump. The chain is Putative manganese efflux pump MntP from Desulforudis audaxviator (strain MP104C).